Reading from the N-terminus, the 246-residue chain is Pyridoxine 5'-phosphate synthase (246 aa).

3-amino-2-oxopropyl phosphate is bound at residue asparagine 10. 1-deoxy-D-xylulose 5-phosphate is bound at residue 12-13 (DH). Residue arginine 21 coordinates 3-amino-2-oxopropyl phosphate. Catalysis depends on histidine 46, which acts as the Proton acceptor. 1-deoxy-D-xylulose 5-phosphate contacts are provided by arginine 48 and histidine 53. The Proton acceptor role is filled by glutamate 73. Threonine 103 provides a ligand contact to 1-deoxy-D-xylulose 5-phosphate. The active-site Proton donor is histidine 193. Residues glycine 194 and 215 to 216 (GH) each bind 3-amino-2-oxopropyl phosphate.

This sequence belongs to the PNP synthase family. Homooctamer; tetramer of dimers.

The protein resides in the cytoplasm. It carries out the reaction 3-amino-2-oxopropyl phosphate + 1-deoxy-D-xylulose 5-phosphate = pyridoxine 5'-phosphate + phosphate + 2 H2O + H(+). Its pathway is cofactor biosynthesis; pyridoxine 5'-phosphate biosynthesis; pyridoxine 5'-phosphate from D-erythrose 4-phosphate: step 5/5. Its function is as follows. Catalyzes the complicated ring closure reaction between the two acyclic compounds 1-deoxy-D-xylulose-5-phosphate (DXP) and 3-amino-2-oxopropyl phosphate (1-amino-acetone-3-phosphate or AAP) to form pyridoxine 5'-phosphate (PNP) and inorganic phosphate. The chain is Pyridoxine 5'-phosphate synthase from Rhodopirellula baltica (strain DSM 10527 / NCIMB 13988 / SH1).